The following is a 311-amino-acid chain: 4-hydroxy-3-methylbut-2-enyl diphosphate reductase (311 aa).

Position 12 (Cys12) interacts with [4Fe-4S] cluster. (2E)-4-hydroxy-3-methylbut-2-enyl diphosphate is bound by residues His43 and His81. The dimethylallyl diphosphate site is built by His43 and His81. 2 residues coordinate isopentenyl diphosphate: His43 and His81. Residue Cys103 coordinates [4Fe-4S] cluster. His131 is a binding site for (2E)-4-hydroxy-3-methylbut-2-enyl diphosphate. A dimethylallyl diphosphate-binding site is contributed by His131. His131 is an isopentenyl diphosphate binding site. Glu133 functions as the Proton donor in the catalytic mechanism. (2E)-4-hydroxy-3-methylbut-2-enyl diphosphate is bound at residue Thr170. Cys198 is a binding site for [4Fe-4S] cluster. (2E)-4-hydroxy-3-methylbut-2-enyl diphosphate is bound by residues Ser226, Asn228, and Ser271. 3 residues coordinate dimethylallyl diphosphate: Ser226, Asn228, and Ser271. Positions 226, 228, and 271 each coordinate isopentenyl diphosphate.

The protein belongs to the IspH family. [4Fe-4S] cluster serves as cofactor.

The catalysed reaction is isopentenyl diphosphate + 2 oxidized [2Fe-2S]-[ferredoxin] + H2O = (2E)-4-hydroxy-3-methylbut-2-enyl diphosphate + 2 reduced [2Fe-2S]-[ferredoxin] + 2 H(+). The enzyme catalyses dimethylallyl diphosphate + 2 oxidized [2Fe-2S]-[ferredoxin] + H2O = (2E)-4-hydroxy-3-methylbut-2-enyl diphosphate + 2 reduced [2Fe-2S]-[ferredoxin] + 2 H(+). The protein operates within isoprenoid biosynthesis; dimethylallyl diphosphate biosynthesis; dimethylallyl diphosphate from (2E)-4-hydroxy-3-methylbutenyl diphosphate: step 1/1. It functions in the pathway isoprenoid biosynthesis; isopentenyl diphosphate biosynthesis via DXP pathway; isopentenyl diphosphate from 1-deoxy-D-xylulose 5-phosphate: step 6/6. Catalyzes the conversion of 1-hydroxy-2-methyl-2-(E)-butenyl 4-diphosphate (HMBPP) into a mixture of isopentenyl diphosphate (IPP) and dimethylallyl diphosphate (DMAPP). Acts in the terminal step of the DOXP/MEP pathway for isoprenoid precursor biosynthesis. In Brevibacillus brevis (strain 47 / JCM 6285 / NBRC 100599), this protein is 4-hydroxy-3-methylbut-2-enyl diphosphate reductase.